Consider the following 152-residue polypeptide: Interleukin-2 (152 aa).

The N-terminal stretch at methionine 1–glycine 20 is a signal peptide. Threonine 23 carries an O-linked (GalNAc...) threonine glycan. Cysteine 78 and cysteine 126 are disulfide-bonded.

The protein belongs to the IL-2 family.

It is found in the secreted. Cytokine produced by activated CD4-positive helper T-cells and to a lesser extend activated CD8-positive T-cells and natural killer (NK) cells that plays pivotal roles in the immune response and tolerance. Binds to a receptor complex composed of either the high-affinity trimeric IL-2R (IL2RA/CD25, IL2RB/CD122 and IL2RG/CD132) or the low-affinity dimeric IL-2R (IL2RB and IL2RG). Interaction with the receptor leads to oligomerization and conformation changes in the IL-2R subunits resulting in downstream signaling starting with phosphorylation of JAK1 and JAK3. In turn, JAK1 and JAK3 phosphorylate the receptor to form a docking site leading to the phosphorylation of several substrates including STAT5. This process leads to activation of several pathways including STAT, phosphoinositide-3-kinase/PI3K and mitogen-activated protein kinase/MAPK pathways. Functions as a T-cell growth factor and can increase NK-cell cytolytic activity as well. Promotes strong proliferation of activated B-cells and subsequently immunoglobulin production. Plays a pivotal role in regulating the adaptive immune system by controlling the survival and proliferation of regulatory T-cells, which are required for the maintenance of immune tolerance. Moreover, participates in the differentiation and homeostasis of effector T-cell subsets, including Th1, Th2, Th17 as well as memory CD8-positive T-cells. This Orcinus orca (Killer whale) protein is Interleukin-2 (IL2).